Consider the following 459-residue polypeptide: SLIT-ROBO Rho GTPase-activating protein 2C (459 aa).

Residues 22 to 325 (KEIRAQLTEQ…AVENLDATSD (304 aa)) form the F-BAR domain. A compositionally biased stretch (basic and acidic residues) spans 181-202 (LKEAEKQEEKQIGKSVKQEDRQ). Residues 181–211 (LKEAEKQEEKQIGKSVKQEDRQTPCSPDSTA) form a disordered region. Residues 363-401 (QSELVQRCQQLQSRLSTLKIENEEVKKTMEATLQTIQDI) adopt a coiled-coil conformation.

In terms of assembly, homodimer. Interacts (via F-BAR domain) with SRGAP2/SRGAP2A (via F-BAR domain); formation of the heterodimer inhibits SRGAP2/SRGAP2A function. Ubiquitously expressed with higher expression in cerebellum. Probably expressed in fetal and adult neurons (at protein level).

Functionally, human-specific protein that acts as a key modifier of cortical connectivity in the human brain. Acts by inhibiting the functions of ancestral paralog SRGAP2/SRGAP2A, a postsynaptic protein that regulates excitatory and inhibitory synapse maturation and density in cortical pyramidal neurons. SRGAP2C is unstable but is able to heterodimerize with SRGAP2/SRGAP2A, thereby reducing SRGAP2/SRGAP2A levels through proteasome-dependent degradation. Inhibition of SRGAP2/SRGAP2A by SRGAP2C leads to an increase in synaptic density and protracted synaptic maturation of both excitatory and inhibitory synapses. Modifies cortical circuit connectivity by increasing the number of local and long-range cortical inputs received by layer 2/3 pyramidal neurons. Also able to increase the probability of sensory-evoked responses by layer 2/3 pyramidal neurons. The polypeptide is SLIT-ROBO Rho GTPase-activating protein 2C (Homo sapiens (Human)).